The following is a 292-amino-acid chain: Homoserine kinase (292 aa).

Residue 84–94 (PLARGMGSSSA) coordinates ATP.

The protein belongs to the GHMP kinase family. Homoserine kinase subfamily.

Its subcellular location is the cytoplasm. The enzyme catalyses L-homoserine + ATP = O-phospho-L-homoserine + ADP + H(+). It participates in amino-acid biosynthesis; L-threonine biosynthesis; L-threonine from L-aspartate: step 4/5. Its function is as follows. Catalyzes the ATP-dependent phosphorylation of L-homoserine to L-homoserine phosphate. In Campylobacter lari (strain RM2100 / D67 / ATCC BAA-1060), this protein is Homoserine kinase.